A 353-amino-acid chain; its full sequence is Paraneoplastic antigen Ma1 homolog (353 aa).

Belongs to the PNMA family. As to expression, testis and brain specific.

It localises to the nucleus. It is found in the nucleolus. In Rattus norvegicus (Rat), this protein is Paraneoplastic antigen Ma1 homolog (Pnma1).